We begin with the raw amino-acid sequence, 354 residues long: UDP-3-O-acylglucosamine N-acyltransferase (354 aa).

Residue His-250 is the Proton acceptor of the active site.

Belongs to the transferase hexapeptide repeat family. LpxD subfamily. As to quaternary structure, homotrimer.

The enzyme catalyses a UDP-3-O-[(3R)-3-hydroxyacyl]-alpha-D-glucosamine + a (3R)-hydroxyacyl-[ACP] = a UDP-2-N,3-O-bis[(3R)-3-hydroxyacyl]-alpha-D-glucosamine + holo-[ACP] + H(+). It functions in the pathway bacterial outer membrane biogenesis; LPS lipid A biosynthesis. Catalyzes the N-acylation of UDP-3-O-acylglucosamine using 3-hydroxyacyl-ACP as the acyl donor. Is involved in the biosynthesis of lipid A, a phosphorylated glycolipid that anchors the lipopolysaccharide to the outer membrane of the cell. This chain is UDP-3-O-acylglucosamine N-acyltransferase, found in Methylococcus capsulatus (strain ATCC 33009 / NCIMB 11132 / Bath).